The following is a 25-amino-acid chain: Ribosome-inactivating protein charantin (25 aa).

Monomer.

The enzyme catalyses Endohydrolysis of the N-glycosidic bond at one specific adenosine on the 28S rRNA.. Its function is as follows. Inhibits cell-free translation in a rabbit reticulocyte lysate system. This is Ribosome-inactivating protein charantin from Momordica charantia (Bitter gourd).